The following is an 80-amino-acid chain: Large ribosomal subunit protein bL31B (80 aa).

This sequence belongs to the bacterial ribosomal protein bL31 family. Type B subfamily. Part of the 50S ribosomal subunit.

The protein is Large ribosomal subunit protein bL31B of Streptococcus mutans serotype c (strain ATCC 700610 / UA159).